Reading from the N-terminus, the 291-residue chain is 4-diphosphocytidyl-2-C-methyl-D-erythritol kinase (291 aa).

The active site involves lysine 10. 99–109 (PMGGGLGGGSS) provides a ligand contact to ATP. The active site involves aspartate 141.

It belongs to the GHMP kinase family. IspE subfamily. In terms of assembly, homodimer.

The enzyme catalyses 4-CDP-2-C-methyl-D-erythritol + ATP = 4-CDP-2-C-methyl-D-erythritol 2-phosphate + ADP + H(+). It participates in isoprenoid biosynthesis; isopentenyl diphosphate biosynthesis via DXP pathway; isopentenyl diphosphate from 1-deoxy-D-xylulose 5-phosphate: step 3/6. Catalyzes the phosphorylation of the position 2 hydroxy group of 4-diphosphocytidyl-2C-methyl-D-erythritol. In Proteus mirabilis (strain HI4320), this protein is 4-diphosphocytidyl-2-C-methyl-D-erythritol kinase.